Here is a 275-residue protein sequence, read N- to C-terminus: Thiazole synthase (275 aa).

The Schiff-base intermediate with DXP role is filled by Lys108. 1-deoxy-D-xylulose 5-phosphate contacts are provided by residues Gly169, 196 to 197 (AG), and 218 to 219 (NT).

The protein belongs to the ThiG family. Homotetramer. Forms heterodimers with either ThiH or ThiS.

It is found in the cytoplasm. The catalysed reaction is [ThiS sulfur-carrier protein]-C-terminal-Gly-aminoethanethioate + 2-iminoacetate + 1-deoxy-D-xylulose 5-phosphate = [ThiS sulfur-carrier protein]-C-terminal Gly-Gly + 2-[(2R,5Z)-2-carboxy-4-methylthiazol-5(2H)-ylidene]ethyl phosphate + 2 H2O + H(+). Its pathway is cofactor biosynthesis; thiamine diphosphate biosynthesis. Its function is as follows. Catalyzes the rearrangement of 1-deoxy-D-xylulose 5-phosphate (DXP) to produce the thiazole phosphate moiety of thiamine. Sulfur is provided by the thiocarboxylate moiety of the carrier protein ThiS. In vitro, sulfur can be provided by H(2)S. The polypeptide is Thiazole synthase (Ralstonia nicotianae (strain ATCC BAA-1114 / GMI1000) (Ralstonia solanacearum)).